The primary structure comprises 198 residues: Imidazoleglycerol-phosphate dehydratase (198 aa).

This sequence belongs to the imidazoleglycerol-phosphate dehydratase family.

The protein resides in the cytoplasm. The enzyme catalyses D-erythro-1-(imidazol-4-yl)glycerol 3-phosphate = 3-(imidazol-4-yl)-2-oxopropyl phosphate + H2O. It functions in the pathway amino-acid biosynthesis; L-histidine biosynthesis; L-histidine from 5-phospho-alpha-D-ribose 1-diphosphate: step 6/9. The sequence is that of Imidazoleglycerol-phosphate dehydratase from Magnetococcus marinus (strain ATCC BAA-1437 / JCM 17883 / MC-1).